Here is a 421-residue protein sequence, read N- to C-terminus: uncharacterized protein (421 aa).

4 CBS domains span residues 13–74 (MTKD…VRSL), 74–133 (LMYK…MKDT), 139–195 (MTRN…PKKK), and 217–274 (MNTP…KGAM).

This is an uncharacterized protein from Methanocaldococcus jannaschii (strain ATCC 43067 / DSM 2661 / JAL-1 / JCM 10045 / NBRC 100440) (Methanococcus jannaschii).